Reading from the N-terminus, the 367-residue chain is tRNA-specific 2-thiouridylase MnmA (367 aa).

ATP is bound by residues 10 to 17 (AMSGGVDS) and Met-36. Cys-106 serves as the catalytic Nucleophile. Cys-106 and Cys-204 are joined by a disulfide. Gly-130 contributes to the ATP binding site. The interaction with tRNA stretch occupies residues 154-156 (KDQ). Cys-204 serves as the catalytic Cysteine persulfide intermediate. An interaction with tRNA region spans residues 310 to 311 (RY).

This sequence belongs to the MnmA/TRMU family.

It localises to the cytoplasm. It carries out the reaction S-sulfanyl-L-cysteinyl-[protein] + uridine(34) in tRNA + AH2 + ATP = 2-thiouridine(34) in tRNA + L-cysteinyl-[protein] + A + AMP + diphosphate + H(+). Its function is as follows. Catalyzes the 2-thiolation of uridine at the wobble position (U34) of tRNA, leading to the formation of s(2)U34. This chain is tRNA-specific 2-thiouridylase MnmA, found in Desulforamulus reducens (strain ATCC BAA-1160 / DSM 100696 / MI-1) (Desulfotomaculum reducens).